The following is a 439-amino-acid chain: Acyl transferase 7 (439 aa).

The interval 1–25 (MAAAAPDKAVERLSQKLVHPSSPTP) is disordered. Residues histidine 176 and aspartate 383 each act as proton acceptor in the active site.

The protein belongs to the plant acyltransferase family.

Functionally, involved in the incorporation of ferulate into the cell wall. May act as arabinoxylan feruloyl transferase. This chain is Acyl transferase 7, found in Oryza sativa subsp. japonica (Rice).